The following is a 694-amino-acid chain: Potassium-transporting ATPase ATP-binding subunit (694 aa).

4 helical membrane-spanning segments follow: residues 36–56 (VMFV…RDLI), 62–82 (LAFS…ANFA), 218–238 (IALN…TATI), and 249–269 (IPII…IGAL). Residue Asp306 is the 4-aspartylphosphate intermediate of the active site. ATP contacts are provided by residues Asp343, Glu347, 376-383 (FTAQTRMS), and Lys394. Residues Asp530 and Asp534 each contribute to the Mg(2+) site. 3 helical membrane-spanning segments follow: residues 600-620 (FAII…LNVM), 628-648 (AILS…PLSL), and 666-686 (LVIY…LIDL).

The protein belongs to the cation transport ATPase (P-type) (TC 3.A.3) family. Type IA subfamily. As to quaternary structure, the system is composed of three essential subunits: KdpA, KdpB and KdpC.

Its subcellular location is the cell inner membrane. The catalysed reaction is K(+)(out) + ATP + H2O = K(+)(in) + ADP + phosphate + H(+). In terms of biological role, part of the high-affinity ATP-driven potassium transport (or Kdp) system, which catalyzes the hydrolysis of ATP coupled with the electrogenic transport of potassium into the cytoplasm. This subunit is responsible for energy coupling to the transport system and for the release of the potassium ions to the cytoplasm. This Agrobacterium fabrum (strain C58 / ATCC 33970) (Agrobacterium tumefaciens (strain C58)) protein is Potassium-transporting ATPase ATP-binding subunit.